An 840-amino-acid polypeptide reads, in one-letter code: Protein translocase subunit SecA (840 aa).

Residues Gln85, Gly103–Thr107, and Asp492 contribute to the ATP site. Positions Gln787–Leu822 are disordered. Basic and acidic residues predominate over residues Asp802–Arg819. Positions 823, 825, 834, and 835 each coordinate Zn(2+).

Belongs to the SecA family. Monomer and homodimer. Part of the essential Sec protein translocation apparatus which comprises SecA, SecYEG and auxiliary proteins SecDF. Other proteins may also be involved. Zn(2+) is required as a cofactor.

It localises to the cell membrane. It is found in the cytoplasm. The catalysed reaction is ATP + H2O + cellular proteinSide 1 = ADP + phosphate + cellular proteinSide 2.. Functionally, part of the Sec protein translocase complex. Interacts with the SecYEG preprotein conducting channel. Has a central role in coupling the hydrolysis of ATP to the transfer of proteins into and across the cell membrane, serving as an ATP-driven molecular motor driving the stepwise translocation of polypeptide chains across the membrane. The sequence is that of Protein translocase subunit SecA from Clostridium perfringens (strain ATCC 13124 / DSM 756 / JCM 1290 / NCIMB 6125 / NCTC 8237 / Type A).